The sequence spans 362 residues: uncharacterized protein (362 aa).

Positions 314-323 (GEEKEPKQES) are enriched in basic and acidic residues. Residues 314–362 (GEEKEPKQESQEQLFNPFTIDEMLTEEQQQQQEEENNATEEEGDTVKLG) are disordered. Acidic residues predominate over residues 345–356 (QEEENNATEEEG).

This is an uncharacterized protein from Acidianus two-tailed virus (ATV).